A 452-amino-acid polypeptide reads, in one-letter code: UDP-N-acetylmuramoylalanine--D-glutamate ligase (452 aa).

119–125 (GSNGKTT) is a binding site for ATP.

This sequence belongs to the MurCDEF family.

It is found in the cytoplasm. It catalyses the reaction UDP-N-acetyl-alpha-D-muramoyl-L-alanine + D-glutamate + ATP = UDP-N-acetyl-alpha-D-muramoyl-L-alanyl-D-glutamate + ADP + phosphate + H(+). The protein operates within cell wall biogenesis; peptidoglycan biosynthesis. Its function is as follows. Cell wall formation. Catalyzes the addition of glutamate to the nucleotide precursor UDP-N-acetylmuramoyl-L-alanine (UMA). The protein is UDP-N-acetylmuramoylalanine--D-glutamate ligase of Streptococcus equi subsp. zooepidemicus (strain MGCS10565).